A 90-amino-acid chain; its full sequence is Small ribosomal subunit protein bS16 (90 aa).

The protein belongs to the bacterial ribosomal protein bS16 family.

This Listeria monocytogenes serotype 4b (strain F2365) protein is Small ribosomal subunit protein bS16.